The primary structure comprises 444 residues: L-cysteine:1D-myo-inositol 2-amino-2-deoxy-alpha-D-glucopyranoside ligase (444 aa).

Cys-66 contributes to the Zn(2+) binding site. Residues 66-69, Thr-81, and 104-106 contribute to the L-cysteinyl-5'-AMP site; these read CGIT and NVT. Positions 68–78 match the 'HIGH' region motif; sequence ITPYDATHLGH. The 'ERGGDP' region signature appears at 206-211; that stretch reads EHGGDP. Residue Trp-246 participates in L-cysteinyl-5'-AMP binding. Residue Cys-250 participates in Zn(2+) binding. 268–270 contacts L-cysteinyl-5'-AMP; that stretch reads GSD. His-275 provides a ligand contact to Zn(2+). Val-302 serves as a coordination point for L-cysteinyl-5'-AMP. A 'KMSKS' region motif is present at residues 308 to 312; it reads KMSKS.

This sequence belongs to the class-I aminoacyl-tRNA synthetase family. MshC subfamily. As to quaternary structure, monomer. Zn(2+) serves as cofactor.

It catalyses the reaction 1D-myo-inositol 2-amino-2-deoxy-alpha-D-glucopyranoside + L-cysteine + ATP = 1D-myo-inositol 2-(L-cysteinylamino)-2-deoxy-alpha-D-glucopyranoside + AMP + diphosphate + H(+). Functionally, catalyzes the ATP-dependent condensation of GlcN-Ins and L-cysteine to form L-Cys-GlcN-Ins. This is L-cysteine:1D-myo-inositol 2-amino-2-deoxy-alpha-D-glucopyranoside ligase from Parafrankia sp. (strain EAN1pec).